The following is a 356-amino-acid chain: tRNA N6-adenosine threonylcarbamoyltransferase (356 aa).

Positions 111 and 115 each coordinate Fe cation. Residues Leu-143–Gly-147, Asp-178, Gly-191, Asp-195, and Asn-286 contribute to the substrate site. Fe cation is bound at residue Asp-314.

The protein belongs to the KAE1 / TsaD family. Fe(2+) is required as a cofactor.

It localises to the cytoplasm. It carries out the reaction L-threonylcarbamoyladenylate + adenosine(37) in tRNA = N(6)-L-threonylcarbamoyladenosine(37) in tRNA + AMP + H(+). Its function is as follows. Required for the formation of a threonylcarbamoyl group on adenosine at position 37 (t(6)A37) in tRNAs that read codons beginning with adenine. Is involved in the transfer of the threonylcarbamoyl moiety of threonylcarbamoyl-AMP (TC-AMP) to the N6 group of A37, together with TsaE and TsaB. TsaD likely plays a direct catalytic role in this reaction. In Sorangium cellulosum (strain So ce56) (Polyangium cellulosum (strain So ce56)), this protein is tRNA N6-adenosine threonylcarbamoyltransferase.